The primary structure comprises 775 residues: Meiotic driver SPOK2 (775 aa).

A coiled-coil region spans residues 4–69 (KDRIAQLLRE…RCERERLQLE (66 aa)). Disordered stretches follow at residues 18–51 (KARE…REEE), 211–249 (QKDD…YICS), 442–525 (LSSA…AMAD), and 734–761 (PPPK…AQLF). The span at 444-457 (SAPSSQNTDISEYT) shows a compositional bias: polar residues.

It is found in the cytoplasm. The protein localises to the nucleus. Its function is as follows. Promotes unequal transmission of alleles from the parental zygote to progeny spores by acting as poison/antidote system, leading to poisoning of progeny that do not inherit the allele. May possess DNA nuclease activity that leads to spore killing, and a kinase activity that confers resistance to the nuclease activity. The chain is Meiotic driver SPOK2 from Podospora anserina (strain S / ATCC MYA-4624 / DSM 980 / FGSC 10383) (Pleurage anserina).